The chain runs to 154 residues: Metallothiol transferase FosB (154 aa).

A VOC domain is found at 8-123 (GINHLLFSVS…DGHKFELHTG (116 aa)). Mg(2+) is bound by residues His-11, His-70, and Glu-119. Glu-119 (proton donor/acceptor) is an active-site residue.

This sequence belongs to the fosfomycin resistance protein family. FosB subfamily. As to quaternary structure, homodimer. The cofactor is Mg(2+).

The protein resides in the cytoplasm. In terms of biological role, metallothiol transferase which confers resistance to fosfomycin by catalyzing the addition of a thiol cofactor to fosfomycin. L-cysteine is probably the physiological thiol donor. The protein is Metallothiol transferase FosB of Bacillus licheniformis (strain ATCC 14580 / DSM 13 / JCM 2505 / CCUG 7422 / NBRC 12200 / NCIMB 9375 / NCTC 10341 / NRRL NRS-1264 / Gibson 46).